Reading from the N-terminus, the 444-residue chain is Multidrug resistance protein MdtA (444 aa).

The first 20 residues, 1–20 (MKSQSKRTSRLFVFVGVVVA), serve as a signal peptide directing secretion. A compositionally biased stretch (polar residues) spans 37-52 (NNTSGAQQSARGQDTS). 2 disordered regions span residues 37–60 (NNTS…RNTP) and 398–444 (TPRS…AEKS). Residues 406-419 (ANPASAEKAAAEAE) show a composition bias toward low complexity. The span at 435–444 (ARSTTAAEKS) shows a compositional bias: polar residues.

It belongs to the membrane fusion protein (MFP) (TC 8.A.1) family. Part of a tripartite efflux system composed of MdtA, MdtB and MdtC.

It is found in the cell inner membrane. The polypeptide is Multidrug resistance protein MdtA (Yersinia pestis bv. Antiqua (strain Antiqua)).